The sequence spans 783 residues: ATP-dependent DNA helicase Hel308 (783 aa).

ATP contacts are provided by residues Gln-29 and 47–54 (VPTASGKT). Residues 34 to 209 (ERGVTEGANL…WLDAELVDSD (176 aa)) form the Helicase ATP-binding domain. A DEAH box motif is present at residues 154–157 (DEVH). A Helicase C-terminal domain is found at 242 to 443 (QTAAVVADTL…EPALRTHVLA (202 aa)). Residues 744 to 783 (ETVGHPDPGMDGVAADTDAAPESGGEAGGDEGQASLGDFS) are disordered.

It belongs to the helicase family. Hel308 subfamily. As to quaternary structure, monomer.

The enzyme catalyses Couples ATP hydrolysis with the unwinding of duplex DNA by translocating in the 3'-5' direction.. It carries out the reaction ATP + H2O = ADP + phosphate + H(+). In terms of biological role, DNA-dependent ATPase and 3'-5' DNA helicase that may be involved in repair of stalled replication forks. The sequence is that of ATP-dependent DNA helicase Hel308 from Halobacterium salinarum (strain ATCC 700922 / JCM 11081 / NRC-1) (Halobacterium halobium).